The chain runs to 356 residues: Replication factor C subunit 3 (356 aa).

At lysine 20 the chain carries N6-acetyllysine. Serine 125 carries the post-translational modification Phosphoserine.

Belongs to the activator 1 small subunits family. In terms of assembly, subunit of the RFC complex, an heteropentameric complex consisting of a large subunit RFC1 and four small subunits RFC2, RFC3, RFC4 and RFC5; the RFC complex interacts with PCNA. Forms an heterotetrameric complex with RFC2, RFC4 and RFC5; this complex has ATPase activity but is not stimulated by PCNA. The heterotetramer of subunits RFC2, RFC3, RFC4 and RFC5 interacts with RAD17. Interacts with CNTD1; this interaction facilitates crossover formation.

It is found in the nucleus. Subunit of the replication factor C (RFC) complex which acts during elongation of primed DNA templates by DNA polymerases delta and epsilon, and is necessary for ATP-dependent loading of proliferating cell nuclear antigen (PCNA) onto primed DNA. This Homo sapiens (Human) protein is Replication factor C subunit 3 (RFC3).